The following is a 387-amino-acid chain: Arginine biosynthesis bifunctional protein ArgJ 2 (387 aa).

Substrate-binding residues include T147, K169, T180, E259, N382, and T387. T180 functions as the Nucleophile in the catalytic mechanism.

The protein belongs to the ArgJ family. In terms of assembly, heterotetramer of two alpha and two beta chains.

Its subcellular location is the cytoplasm. It carries out the reaction N(2)-acetyl-L-ornithine + L-glutamate = N-acetyl-L-glutamate + L-ornithine. The enzyme catalyses L-glutamate + acetyl-CoA = N-acetyl-L-glutamate + CoA + H(+). It participates in amino-acid biosynthesis; L-arginine biosynthesis; L-ornithine and N-acetyl-L-glutamate from L-glutamate and N(2)-acetyl-L-ornithine (cyclic): step 1/1. The protein operates within amino-acid biosynthesis; L-arginine biosynthesis; N(2)-acetyl-L-ornithine from L-glutamate: step 1/4. In terms of biological role, catalyzes two activities which are involved in the cyclic version of arginine biosynthesis: the synthesis of N-acetylglutamate from glutamate and acetyl-CoA as the acetyl donor, and of ornithine by transacetylation between N(2)-acetylornithine and glutamate. The protein is Arginine biosynthesis bifunctional protein ArgJ 2 of Nostoc sp. (strain PCC 7120 / SAG 25.82 / UTEX 2576).